A 460-amino-acid polypeptide reads, in one-letter code: 25S rRNA (cytosine-C(5))-methyltransferase rcm1 (460 aa).

S-adenosyl-L-methionine contacts are provided by residues 223–229, Glu246, Asp273, and Asp293; that span reads CAAPGNK. The Nucleophile role is filled by Cys350. The span at 430–439 shows a compositional bias: basic and acidic residues; sequence KMYKNDDDTK. The segment at 430-460 is disordered; it reads KMYKNDDDTKKRKRKKKKKEVKKKARIQGEE. Residues 440 to 460 show a composition bias toward basic residues; the sequence is KRKRKKKKKEVKKKARIQGEE.

This sequence belongs to the class I-like SAM-binding methyltransferase superfamily. RsmB/NOP family. As to quaternary structure, interacts with trm112.

It is found in the nucleus. Its subcellular location is the nucleolus. It carries out the reaction a cytidine in 25S rRNA + S-adenosyl-L-methionine = a 5-methylcytidine in 25S rRNA + S-adenosyl-L-homocysteine + H(+). In terms of biological role, S-adenosyl-L-methionine-dependent methyltransferase that specifically methylates the C(5) position of a cytosine in 25S rRNA. In Schizosaccharomyces pombe (strain 972 / ATCC 24843) (Fission yeast), this protein is 25S rRNA (cytosine-C(5))-methyltransferase rcm1 (rcm1).